A 460-amino-acid chain; its full sequence is GTPase Der (460 aa).

EngA-type G domains are found at residues 3 to 167 and 189 to 364; these read FTFA…PEPD and IRVA…AVWN. Residues 9 to 16, 56 to 60, 119 to 122, 195 to 202, 242 to 246, and 307 to 310 each bind GTP; these read GRPNVGKS, DTAGL, NKSE, GRPNAGKS, and NKWD. The region spanning 365 to 449 is the KH-like domain; it reads TRVPTAALNR…PVRIMLREKA (85 aa).

It belongs to the TRAFAC class TrmE-Era-EngA-EngB-Septin-like GTPase superfamily. EngA (Der) GTPase family. Associates with the 50S ribosomal subunit.

Its function is as follows. GTPase that plays an essential role in the late steps of ribosome biogenesis. The chain is GTPase Der from Rhodopseudomonas palustris (strain BisB5).